Here is an 841-residue protein sequence, read N- to C-terminus: Putative helicase R592 (841 aa).

Positions 72–309 constitute a Helicase ATP-binding domain; sequence STFVIETNSA…RRYVNKIFGQ (238 aa). 85 to 92 lines the ATP pocket; sequence DKVGAGKT. The segment covering 195-205 has biased composition (basic residues); sequence KLPVKTTKKGG. A disordered region spans residues 195–215; the sequence is KLPVKTTKKGGSKTQNKAQND. Over residues 206–215 the composition is skewed to polar residues; that stretch reads SKTQNKAQND. The short motif at 266-269 is the DEAD box element; the sequence is DEMD. Positions 413-450 form a coiled coil; it reads QDVDAHENRKKNIMNNIARCKTKLESIKEKINSIKDEC. The RING-type; degenerate zinc-finger motif lies at 451–491; that stretch reads CFICTDPFENPTIMNCCKSIFCLKCLLTTLKTVGSKCPYCR. The region spanning 531 to 682 is the Helicase C-terminal domain; that stretch reads VLEQVLSYIS…WMITNPTDLN (152 aa). The tract at residues 678–841 is disordered; that stretch reads PTDLNEEPDE…KAPVRKLIKV (164 aa). Acidic residues predominate over residues 681–697; sequence LNEEPDEESDEGSDEDV. Basic and acidic residues predominate over residues 698–725; that stretch reads EKSKDKKSSDKKSSDKKKSEKKSSDKKS. Residues 726-749 are compositionally biased toward basic residues; it reads SNKKNSKKKTYVKPKSSKKTSQKV. 2 stretches are compositionally biased toward acidic residues: residues 765–774 and 782–804; these read DSDDLDDSDD and SDSD…ESEI. Composition is skewed to basic residues over residues 809 to 821 and 828 to 841; these read KSKK…KKNK and TLKK…LIKV.

In Acanthamoeba polyphaga mimivirus (APMV), this protein is Putative helicase R592.